Reading from the N-terminus, the 2045-residue chain is Host cell factor 1 (2045 aa).

The residue at position 2 (Ala2) is an N-acetylalanine. A Phosphoserine modification is found at Ser6. 5 Kelch repeats span residues 44 to 89 (LIVV…GFVC), 93 to 140 (RLLV…RLGH), 148 to 194 (KCYL…ITYG), 217 to 265 (KLVI…TIGN), and 266 to 313 (KMYV…LMDT). Glycyl lysine isopeptide (Lys-Gly) (interchain with G-Cter in ubiquitin) cross-links involve residues Lys105, Lys163, and Lys244. Lys282 is covalently cross-linked (Glycyl lysine isopeptide (Lys-Gly) (interchain with G-Cter in SUMO2)). N6-acetyllysine is present on Lys288. Lys363 is covalently cross-linked (Glycyl lysine isopeptide (Lys-Gly) (interchain with G-Cter in ubiquitin)). The region spanning 366 to 457 (PPARVQLVRA…VPQAATAPPS (92 aa)) is the Fibronectin type-III 1 domain. The interval 407-434 (ATATSPTPNPVPSVPANPPKSPAPAAAA) is disordered. Residue Ser411 is modified to Phosphoserine. The segment covering 413–428 (TPNPVPSVPANPPKSP) has biased composition (pro residues). Positions 500–550 (LVTMRPASQAGKAPVTVTSLPASVRMVVPTQSAQGTVIGSNPQMSGMAALA) are required for interaction with OGT. An omega-N-methylarginine mark is found at Arg504 and Arg524. Phosphoserine occurs at positions 598, 666, and 669. The interval 610–722 (LKTAAAQVGT…KGPLPAGTIL (113 aa)) is interaction with SIN3A. An interaction with ZBTB17 region spans residues 750–902 (ILGISSVSPS…SLAGAGAHST (153 aa)). Position 813 is an N6-acetyllysine (Lys813). Residues 813–912 (KIITAVPKIA…SASLATPITT (100 aa)) form an interaction with GABP2 region. 3 HCF repeat repeats span residues 1010–1035 (TLVCSNPPCETHETGTTNTATTTVVA), 1072–1097 (VRVCSNPPCETHETGTTNTATTATSN), and 1101–1126 (QHGCSNPPCETHETGTTSTATTAMSS). The HCF repeat 4; degenerate repeat unit spans residues 1157-1182 (VQGTVKPQCQTQQTNMTTTTMTVQAT). Ser1204 is subject to Phosphoserine. Position 1216 is an asymmetric dimethylarginine (Arg1216). 4 disordered regions span residues 1219–1242 (LSGPSSKDMPTGRQPETYHTYTTN), 1302–1375 (PCET…TSTG), 1444–1475 (TVTSNMSSNQDPPPAASDQGEVASTQGDSTNI), and 1494–1525 (TTVTQSTPVPGPSVPPPEELQVSPGPRQQLPP). The residue at position 1223 (Ser1223) is a Phosphoserine. HCF repeat repeat units lie at residues 1295–1320 (TQVCSNPPCETHETGTTNTATTSNAG) and 1323–1348 (QRVCSNPPCETHETGTTHTATTATSN). Low complexity predominate over residues 1308–1321 (TGTTNTATTSNAGS). The stretch at 1358–1383 (QQPASGHPCETHQTTSTGTTMSVSVG) is one HCF repeat 7; degenerate repeat. The HCF repeat 8 repeat unit spans residues 1423–1448 (QRVCSNPPCETHETGTTHTATTVTSN). At Thr1500 the chain carries Phosphothreonine. Pro residues predominate over residues 1502-1511 (VPGPSVPPPE). Ser1506, Ser1516, and Ser1781 each carry phosphoserine. Fibronectin type-III domains lie at 1808–1898 (PPPP…TCLP) and 1900–2016 (FPGA…TSKD). Glycyl lysine isopeptide (Lys-Gly) (interchain with G-Cter in ubiquitin) cross-links involve residues Lys1817 and Lys1818. Ser1848 bears the Phosphoserine mark. The tract at residues 2004 to 2045 (ATQVRWLQETSKDSSGTKPASKRPMSSPEMKSAPKKSKADGQ) is disordered. Lys2015 is subject to N6-acetyllysine. Residue Lys2034 forms a Glycyl lysine isopeptide (Lys-Gly) (interchain with G-Cter in SUMO2) linkage.

In terms of assembly, composed predominantly of six polypeptides ranging from 110 to 150 kDa and a minor 300 kDa polypeptide. The majority of N- and C-terminal cleavage products remain tightly, albeit non-covalently, associated. Interacts with POU2F1, CREB3, ZBTB17, EGR2, E2F4, CREBZF, SP1, GABP2, Sin3 HDAC complex (SIN3A, HDAC1, HDAC2, SUDS3), SAP30, SIN3B and FHL2. Component of a MLL1 complex, composed of at least the core components KMT2A/MLL1, ASH2L, HCFC1, WDR5 and RBBP5, as well as the facultative components BACC1, CHD8, DPY30, E2F6, HCFC2, HSP70, INO80C, KANSL1, LAS1L, MAX, MCRS1, MEN1, MGA, KAT8, PELP1, PHF20, PRP31, RING2, RUVBL1, RUVBL2, SENP3, TAF1, TAF4, TAF6, TAF7, TAF9 and TEX10. Component of a THAP1/THAP3-HCFC1-OGT complex that is required for the regulation of the transcriptional activity of RRM1. Interacts directly with THAP3 (via its HBM). Interacts (via the Kelch-repeat domain) with THAP1 (via the HBM); the interaction recruits HCHC1 to the RRM1. Interacts with THAP7 and THAP11 (via the HMB). Interacts directly with OGT; the interaction, which requires the HCFC1 cleavage site domain, glycosylates and promotes the proteolytic processing of HCFC1 and retains OGT in the nucleus. Component of the SET1 complex, at least composed of the catalytic subunit (SETD1A or SETD1B), WDR5, WDR82, RBBP5, ASH2L, CXXC1, HCFC1 and DPY30. Component of the NSL complex at least composed of MOF/KAT8, KANSL1, KANSL2, KANSL3, MCRS1, PHF20, OGT1/OGT, WDR5 and HCFC1. Component of a complex at least composed of ZNF335, HCFC1, CCAR2, EMSY, MKI67, RBBP5, ASH2L and WDR5; the complex is formed as a result of interactions between components of a nuclear receptor-mediated transcription complex and a histone methylation complex. Within the complex interacts with ZNF335. Interacts with TET2 and TET3. Interacts with HCFC1R1. Interacts with THAP11. Interacts (via Kelch domain) with KMT2E (via HBM motif). Interacts with E2F1. Accessory scaffold component of the polycomb repressive deubiquitinase (PR-DUB) complex, at least composed of BAP1, one of ASXL1, ASXL2 or (probably) ASXL3 and one of MBD5 or MBD6; the PR-DUB core associates with a number of accessory proteins, including FOXK1, FOXK2, KDM1B, HCFC1, YY1 and OGT. Interacts with YY1 (via Gly-rich region); the interaction is direct. Interacts with BAP1 (via HBM-like motif). Proteolytically cleaved at one or several PPCE--THET sites within the HCF repeats. Further cleavage of the primary N- and C-terminal chains results in a 'trimming' and accumulation of the smaller chains. Cleavage is promoted by O-glycosylation. In terms of processing, O-glycosylated. GlcNAcylation by OGT promotes proteolytic processing. Post-translationally, ubiquitinated. Lys-1817 and Lys-1818 are ubiquitinated both via 'Lys-48'- and 'Lys-63'-linked polyubiquitin chains. BAP1 mediated deubiquitination of 'Lys-48'-linked polyubiquitin chains; deubiquitination by BAP1 does not seem to stabilize the protein. As to expression, expressed in liver, pituitary gland, skeletal muscle, kidney, eye and brain (at protein level). Also observed at low level in heart, spleen and lung.

It is found in the nucleus. It localises to the cytoplasm. In terms of biological role, transcriptional coregulator. Serves as a scaffold protein, bridging interactions between transcription factors, including THAP11 and ZNF143, and transcriptional coregulators. Involved in control of the cell cycle. Also antagonizes transactivation by ZBTB17 and GABP2; represses ZBTB17 activation of the p15(INK4b) promoter and inhibits its ability to recruit p300. Coactivator for EGR2 and GABP2. Tethers the chromatin modifying Set1/Ash2 histone H3 'Lys-4' methyltransferase (H3K4me) and Sin3 histone deacetylase (HDAC) complexes (involved in the activation and repression of transcription respectively) together. As part of the NSL complex it may be involved in acetylation of nucleosomal histone H4 on several lysine residues. Recruits KMT2E to E2F1 responsive promoters promoting transcriptional activation and thereby facilitates G1 to S phase transition. Modulates expression of homeobox protein PDX1, perhaps acting in concert with transcription factor E2F1, thereby regulating pancreatic beta-cell growth and glucose-stimulated insulin secretion. May negatively modulate transcriptional activity of FOXO3. In Mus musculus (Mouse), this protein is Host cell factor 1.